Reading from the N-terminus, the 136-residue chain is MAKEFSRSQRVSQEMQKEIALILQREIKDPRVGMATVSGIELSRDLAYAKVFVTFLNVLTDNADPDTVKNGIKALQDASGYIRTLLGKAMRLRIVPELTFAYDNSLIEGMRMSNLVTNVIKNDVERQVNPGSDEEK.

Belongs to the RbfA family. As to quaternary structure, monomer. Binds 30S ribosomal subunits, but not 50S ribosomal subunits or 70S ribosomes.

The protein localises to the cytoplasm. Its function is as follows. One of several proteins that assist in the late maturation steps of the functional core of the 30S ribosomal subunit. Associates with free 30S ribosomal subunits (but not with 30S subunits that are part of 70S ribosomes or polysomes). Required for efficient processing of 16S rRNA. May interact with the 5'-terminal helix region of 16S rRNA. This is Ribosome-binding factor A from Yersinia enterocolitica serotype O:8 / biotype 1B (strain NCTC 13174 / 8081).